The sequence spans 345 residues: Phosphate acyltransferase (345 aa).

It belongs to the PlsX family. As to quaternary structure, homodimer. Probably interacts with PlsY.

It is found in the cytoplasm. The enzyme catalyses a fatty acyl-[ACP] + phosphate = an acyl phosphate + holo-[ACP]. It functions in the pathway lipid metabolism; phospholipid metabolism. Catalyzes the reversible formation of acyl-phosphate (acyl-PO(4)) from acyl-[acyl-carrier-protein] (acyl-ACP). This enzyme utilizes acyl-ACP as fatty acyl donor, but not acyl-CoA. The protein is Phosphate acyltransferase of Chromobacterium violaceum (strain ATCC 12472 / DSM 30191 / JCM 1249 / CCUG 213 / NBRC 12614 / NCIMB 9131 / NCTC 9757 / MK).